Consider the following 85-residue polypeptide: Acyl carrier protein ScoB (85 aa).

The region spanning 1 to 77 is the Carrier domain; that stretch reads MPAPLTLDGF…QWWQLLSARQ (77 aa). Position 38 is an O-(pantetheine 4'-phosphoryl)serine (Ser38).

This sequence belongs to the acyl carrier protein (ACP) family. It depends on pantetheine 4'-phosphate as a cofactor.

It functions in the pathway lipid metabolism; fatty acid metabolism. In terms of biological role, acyl-carrier protein (ACP) involved in the biosynthesis of a unique class of isonitrile lipopeptides (INLPs). Is the dedicated ACP for the loading of activated acyl groups catalyzed by ScoC. This Streptomyces coeruleorubidus protein is Acyl carrier protein ScoB.